Here is a 175-residue protein sequence, read N- to C-terminus: Methylated-DNA--protein-cysteine methyltransferase (175 aa).

C142 (nucleophile; methyl group acceptor) is an active-site residue.

It belongs to the MGMT family.

Its subcellular location is the cytoplasm. It carries out the reaction a 6-O-methyl-2'-deoxyguanosine in DNA + L-cysteinyl-[protein] = S-methyl-L-cysteinyl-[protein] + a 2'-deoxyguanosine in DNA. The catalysed reaction is a 4-O-methyl-thymidine in DNA + L-cysteinyl-[protein] = a thymidine in DNA + S-methyl-L-cysteinyl-[protein]. Its function is as follows. Involved in the cellular defense against the biological effects of O6-methylguanine (O6-MeG) and O4-methylthymine (O4-MeT) in DNA. Repairs the methylated nucleobase in DNA by stoichiometrically transferring the methyl group to a cysteine residue in the enzyme. This is a suicide reaction: the enzyme is irreversibly inactivated. This chain is Methylated-DNA--protein-cysteine methyltransferase, found in Thermococcus barophilus (strain DSM 11836 / MP).